A 464-amino-acid chain; its full sequence is E3 ubiquitin-protein ligase TRAIP (464 aa).

An RING-type; atypical zinc finger spans residues 7 to 50 (CTICSDFFDNARDVAAITCGHTFHQECLLQWFHSAPHRTCPQCR). 2 coiled-coil regions span residues 142–186 (LDKQ…MIRD) and 236–277 (AQKA…LQKT). The tract at residues 439–464 (KRKKVSRPTACTSSLANQPRLEDFLK) is disordered. The PIP-box motif lies at 456–464 (QPRLEDFLK).

The protein belongs to the TRAIP family.

Its subcellular location is the nucleus. The protein localises to the nucleoplasm. It is found in the nucleolus. The protein resides in the chromosome. It localises to the cytoplasm. The catalysed reaction is S-ubiquitinyl-[E2 ubiquitin-conjugating enzyme]-L-cysteine + [acceptor protein]-L-lysine = [E2 ubiquitin-conjugating enzyme]-L-cysteine + N(6)-ubiquitinyl-[acceptor protein]-L-lysine.. The protein operates within protein modification; protein ubiquitination. Functionally, E3 ubiquitin ligase required to protect genome stability in response to replication stress. Acts as a key regulator of interstrand cross-link repair, which takes place when both strands of duplex DNA are covalently tethered together, thereby blocking replication and transcription. Controls the choice between the two pathways of replication-coupled interstrand-cross-link repair by mediating ubiquitination of mcm7 subunit of the CMG helicase complex. Short ubiquitin chains on mcm7 promote recruitment of DNA glycosylase neil3. If the interstrand cross-link cannot be cleaved by neil3, the ubiquitin chains continue to grow on mcm7, promoting the unloading of the CMG helicase complex by the vcp/p97 ATPase, enabling the Fanconi anemia DNA repair pathway. Only catalyzes ubiquitination of mcm7 when forks converge. Also involved in the repair of covalent DNA-protein cross-links (DPCs) during DNA synthesis: promotes ubiquitination of DPCs, leading to their degradation by the proteasome. Also acts as a negative regulator of innate immune signaling by inhibiting activation of NF-kappa-B mediated by TNF. The chain is E3 ubiquitin-protein ligase TRAIP from Xenopus laevis (African clawed frog).